The following is a 694-amino-acid chain: Elongation factor G (694 aa).

Positions 9 to 288 (SKIRNIGIMA…VIVKWLPSPK (280 aa)) constitute a tr-type G domain. Residues 18–25 (AHIDAGKT), 82–86 (DTPGH), and 136–139 (NKMD) contribute to the GTP site.

It belongs to the TRAFAC class translation factor GTPase superfamily. Classic translation factor GTPase family. EF-G/EF-2 subfamily.

It localises to the cytoplasm. Catalyzes the GTP-dependent ribosomal translocation step during translation elongation. During this step, the ribosome changes from the pre-translocational (PRE) to the post-translocational (POST) state as the newly formed A-site-bound peptidyl-tRNA and P-site-bound deacylated tRNA move to the P and E sites, respectively. Catalyzes the coordinated movement of the two tRNA molecules, the mRNA and conformational changes in the ribosome. This chain is Elongation factor G, found in Chlamydia felis (strain Fe/C-56) (Chlamydophila felis).